A 63-amino-acid polypeptide reads, in one-letter code: Sec-independent protein translocase protein TatA (63 aa).

The helical transmembrane segment at M1–G21 threads the bilayer. The interval G42–K63 is disordered. The span at K53 to K63 shows a compositional bias: basic and acidic residues.

This sequence belongs to the TatA/E family. The Tat system comprises two distinct complexes: a TatABC complex, containing multiple copies of TatA, TatB and TatC subunits, and a separate TatA complex, containing only TatA subunits. Substrates initially bind to the TatABC complex, which probably triggers association of the separate TatA complex to form the active translocon.

The protein resides in the cell inner membrane. Its function is as follows. Part of the twin-arginine translocation (Tat) system that transports large folded proteins containing a characteristic twin-arginine motif in their signal peptide across membranes. TatA could form the protein-conducting channel of the Tat system. In Rhizobium etli (strain CIAT 652), this protein is Sec-independent protein translocase protein TatA.